Consider the following 209-residue polypeptide: Small ribosomal subunit protein uS3 (209 aa).

A KH type-2 domain is found at 38–107 (IRKVVKNAYS…RVIVNVEEIK (70 aa)).

Belongs to the universal ribosomal protein uS3 family. As to quaternary structure, part of the 30S ribosomal subunit. Forms a tight complex with proteins S10 and S14.

Binds the lower part of the 30S subunit head. Binds mRNA in the 70S ribosome, positioning it for translation. In Pseudothermotoga lettingae (strain ATCC BAA-301 / DSM 14385 / NBRC 107922 / TMO) (Thermotoga lettingae), this protein is Small ribosomal subunit protein uS3.